The primary structure comprises 259 residues: uncharacterized protein (259 aa).

A signal peptide (or 26) is located at residues 1-19 (MKLSVKIAGVLTVAAAAMT). An ATP-binding site is contributed by 214 to 221 (GPYELGKT).

This is an uncharacterized protein from Bacillus subtilis (strain 168).